The primary structure comprises 359 residues: Structure-specific endonuclease subunit SLX1 homolog (359 aa).

A GIY-YIG domain is found at 9–91 (GLFACYCLVA…TYPTRSRYVN (83 aa)). The SLX1-type zinc finger occupies 192 to 238 (CPICQDGVSPSNVQCMQCSARFCITCAGKLFTRRNTLIPCFGKCPIC). A disordered region spans residues 256 to 359 (VAGRKSVPHK…LPSDVISITD (104 aa)). Polar residues predominate over residues 269 to 281 (VDGQSSLSQNSSY). Residues 295–306 (EPEKDDISRDES) show a composition bias toward basic and acidic residues. Positions 316 to 326 (SSVALSDSSRS) are enriched in low complexity.

The protein belongs to the SLX1 family. As to quaternary structure, forms a heterodimer with a member of the SLX4 family. It depends on a divalent metal cation as a cofactor.

It localises to the nucleus. Its function is as follows. Catalytic subunit of a heterodimeric structure-specific endonuclease that resolves DNA secondary structures generated during DNA repair and recombination. Has endonuclease activity towards branched DNA substrates, introducing single-strand cuts in duplex DNA close to junctions with ss-DNA. The polypeptide is Structure-specific endonuclease subunit SLX1 homolog (Giardia intestinalis (strain ATCC 50803 / WB clone C6) (Giardia lamblia)).